The following is a 445-amino-acid chain: Probable glycine dehydrogenase (decarboxylating) subunit 1 (445 aa).

The protein belongs to the GcvP family. N-terminal subunit subfamily. The glycine cleavage system is composed of four proteins: P, T, L and H. In this organism, the P 'protein' is a heterodimer of two subunits.

The catalysed reaction is N(6)-[(R)-lipoyl]-L-lysyl-[glycine-cleavage complex H protein] + glycine + H(+) = N(6)-[(R)-S(8)-aminomethyldihydrolipoyl]-L-lysyl-[glycine-cleavage complex H protein] + CO2. Functionally, the glycine cleavage system catalyzes the degradation of glycine. The P protein binds the alpha-amino group of glycine through its pyridoxal phosphate cofactor; CO(2) is released and the remaining methylamine moiety is then transferred to the lipoamide cofactor of the H protein. In Citrifermentans bemidjiense (strain ATCC BAA-1014 / DSM 16622 / JCM 12645 / Bem) (Geobacter bemidjiensis), this protein is Probable glycine dehydrogenase (decarboxylating) subunit 1.